Here is a 390-residue protein sequence, read N- to C-terminus: Lipid-A-disaccharide synthase (390 aa).

The protein belongs to the LpxB family.

It catalyses the reaction a lipid X + a UDP-2-N,3-O-bis[(3R)-3-hydroxyacyl]-alpha-D-glucosamine = a lipid A disaccharide + UDP + H(+). Its pathway is bacterial outer membrane biogenesis; LPS lipid A biosynthesis. Functionally, condensation of UDP-2,3-diacylglucosamine and 2,3-diacylglucosamine-1-phosphate to form lipid A disaccharide, a precursor of lipid A, a phosphorylated glycolipid that anchors the lipopolysaccharide to the outer membrane of the cell. This chain is Lipid-A-disaccharide synthase, found in Paramagnetospirillum magneticum (strain ATCC 700264 / AMB-1) (Magnetospirillum magneticum).